We begin with the raw amino-acid sequence, 579 residues long: SHC-transforming protein 1 (579 aa).

Met-1 bears the N-acetylmethionine mark. A disordered region spans residues 1–137 (MDLLPPKPKY…QLGGEEWTRH (137 aa)). Residues 16-44 (ESLSSLEEGASGSTPPEELPSPSASSLGP) show a composition bias toward low complexity. Phosphoserine occurs at positions 36 and 139. The residue at position 154 (Lys-154) is an N6-acetyllysine. A PID domain is found at 156 to 339 (MGPGVSYLVR…AGFDGSAWDE (184 aa)). Residues 337–357 (WDEEEEEPPDHQYYNDFPGKE) are disordered. The tract at residues 340–483 (EEEEPPDHQY…SMAEQLQGEP (144 aa)) is CH1. Phosphotyrosine occurs at positions 349, 350, and 423. Positions 432–451 (ARQAGGGAGPPNPSLNGSAP) are disordered. Ser-449 is subject to Phosphoserine. The SH2 domain maps to 484–575 (WFHGKLSRRE…GSELCLQQPV (92 aa)).

Interacts with CPNE3; this interaction may mediate the binding of CPNE3 with ERBB2. Interacts with the NPXY motif of tyrosine-phosphorylated IGF1R and INSR in vitro via the PID domain. Once activated, binds to GRB2. Interacts with tyrosine-phosphorylated DDR2 and CD3T. Interacts with the N-terminal region of APS. Interacts with GRB7 and KIT. Interacts with PTK2/FAK1. Interacts with phosphorylated LRP1 and IRS4. Interacts with FLT4 (tyrosine-phosphorylated). Interacts with PDGFRB (tyrosine-phosphorylated). Interacts with ERBB4. Interacts with TEK/TIE2 (tyrosine-phosphorylated). Interacts with ALK, GAB2, TRIM31, INPP5D/SHIP1 and INPPL1/SHIP2. Interacts with PTPN6/SHP (tyrosine phosphorylated). Identified in a complex containing FGFR4, NCAM1, CDH2, PLCG1, FRS2, SRC, SHC1, GAP43 and CTTN. Interacts with EPHB1 and GRB2; activates the MAPK/ERK cascade to regulate cell migration. Interacts with the Trk receptors NTRK1, NTRK2 and NTRK3; in a phosphotyrosine-dependent manner. Interacts with CEACAM1; this interaction is CEACAM1-phosphorylation-dependent and mediates interaction with EGFR or INSR resulting in decrease coupling of SHC1 to the MAPK3/ERK1-MAPK1/ERK2 pathway. Interacts (via PID domain) with PEAK1 (when phosphorylated at 'Tyr-1177'). Found in a complex with PPP1CA, PPP1CC, SHC1 and PEAK1. Phosphorylated in response to FLT4 signaling. Tyrosine phosphorylated by ligand-activated PDGFRB. May be tyrosine phosphorylated by activated PTK2/FAK1. Tyrosine phosphorylated by TEK/TIE2. Tyrosine phosphorylated by activated PTK2B/PYK2. Dephosphorylation by PTPN2 may regulate interaction with GRB2. Phosphorylated by activated epidermal growth factor receptor. Phosphorylated in response to KIT signaling. Isoform p47Shc and isoform p52Shc are phosphorylated on tyrosine residues of the Pro-rich domain. Isoform p66Shc is phosphorylated on Ser-36 by PRKCB upon treatment with insulin, hydrogen peroxide or irradiation with ultraviolet light. FLT3 signaling promotes tyrosine phosphorylation of isoform p47Shc and isoform p52Shc. Also tyrosine phosphorylated by ligand-activated ALK. In terms of tissue distribution, widely expressed. Expressed in neural stem cells but absent in mature neurons.

It is found in the cytoplasm. The protein localises to the cell junction. It localises to the focal adhesion. The protein resides in the mitochondrion matrix. Its subcellular location is the mitochondrion. Functionally, signaling adapter that couples activated growth factor receptors to signaling pathways. Participates in signaling downstream of the angiopoietin receptor TEK/TIE2, and plays a role in the regulation of endothelial cell migration and sprouting angiogenesis. Participates in a signaling cascade initiated by activated KIT and KITLG/SCF. Isoform p47Shc and isoform p52Shc, once phosphorylated, couple activated receptor kinases to Ras via the recruitment of the GRB2/SOS complex and are implicated in the cytoplasmic propagation of mitogenic signals. Isoform p47Shc and isoform p52 may thus function as initiators of the Ras signaling cascade in various non-neuronal systems. Isoform p66Shc does not mediate Ras activation, but is involved in signal transduction pathways that regulate the cellular response to oxidative stress and life span. Isoform p66Shc acts as a downstream target of the tumor suppressor p53 and is indispensable for the ability of stress-activated p53 to induce elevation of intracellular oxidants, cytochrome c release and apoptosis. The expression of isoform p66Shc has been correlated with life span. This is SHC-transforming protein 1 (Shc1) from Mus musculus (Mouse).